Consider the following 709-residue polypeptide: Elongation factor G (709 aa).

Residues 8–297 form the tr-type G domain; the sequence is ANTRNIGIMA…AVIDYLPSPL (290 aa). Residues 17–24, 81–85, and 135–138 each bind GTP; these read AHVDAGKT, DTPGH, and NKMD.

This sequence belongs to the TRAFAC class translation factor GTPase superfamily. Classic translation factor GTPase family. EF-G/EF-2 subfamily.

It is found in the cytoplasm. Functionally, catalyzes the GTP-dependent ribosomal translocation step during translation elongation. During this step, the ribosome changes from the pre-translocational (PRE) to the post-translocational (POST) state as the newly formed A-site-bound peptidyl-tRNA and P-site-bound deacylated tRNA move to the P and E sites, respectively. Catalyzes the coordinated movement of the two tRNA molecules, the mRNA and conformational changes in the ribosome. This Lactococcus lactis subsp. cremoris (strain MG1363) protein is Elongation factor G.